Consider the following 205-residue polypeptide: Outer-membrane lipoprotein LolB (205 aa).

The first 17 residues, 1–17 (MFLRHVIVFSFIALLAG), serve as a signal peptide directing secretion. Residue cysteine 18 is the site of N-palmitoyl cysteine attachment. A lipid anchor (S-diacylglycerol cysteine) is attached at cysteine 18.

Belongs to the LolB family. In terms of assembly, monomer.

The protein localises to the cell outer membrane. Its function is as follows. Plays a critical role in the incorporation of lipoproteins in the outer membrane after they are released by the LolA protein. In Pseudomonas fluorescens (strain Pf0-1), this protein is Outer-membrane lipoprotein LolB.